A 439-amino-acid chain; its full sequence is GTPase Der (439 aa).

EngA-type G domains lie at 4-169 (AMVS…PQEE) and 177-352 (IKIA…EEYN). Residues 10-17 (GRPNVGKS), 57-61 (DTGGL), 120-123 (NKVD), 183-190 (GKPNVGKS), 230-234 (DTAGI), and 295-298 (NKWD) contribute to the GTP site. The KH-like domain occupies 353-437 (KRITTGLLNN…PIVISTKKRG (85 aa)).

The protein belongs to the TRAFAC class TrmE-Era-EngA-EngB-Septin-like GTPase superfamily. EngA (Der) GTPase family. In terms of assembly, associates with the 50S ribosomal subunit.

Its function is as follows. GTPase that plays an essential role in the late steps of ribosome biogenesis. In Thermoanaerobacter sp. (strain X514), this protein is GTPase Der.